The following is a 497-amino-acid chain: Lysine--tRNA ligase (497 aa).

2 residues coordinate Mg(2+): Glu-409 and Glu-416.

Belongs to the class-II aminoacyl-tRNA synthetase family. Homodimer. The cofactor is Mg(2+).

The protein resides in the cytoplasm. It catalyses the reaction tRNA(Lys) + L-lysine + ATP = L-lysyl-tRNA(Lys) + AMP + diphosphate. The polypeptide is Lysine--tRNA ligase (Streptococcus pyogenes serotype M6 (strain ATCC BAA-946 / MGAS10394)).